Here is a 436-residue protein sequence, read N- to C-terminus: Glutamate-1-semialdehyde 2,1-aminomutase (436 aa).

K272 is modified (N6-(pyridoxal phosphate)lysine).

Belongs to the class-III pyridoxal-phosphate-dependent aminotransferase family. HemL subfamily. As to quaternary structure, homodimer. Pyridoxal 5'-phosphate is required as a cofactor.

It is found in the cytoplasm. The catalysed reaction is (S)-4-amino-5-oxopentanoate = 5-aminolevulinate. The protein operates within porphyrin-containing compound metabolism; protoporphyrin-IX biosynthesis; 5-aminolevulinate from L-glutamyl-tRNA(Glu): step 2/2. Its pathway is porphyrin-containing compound metabolism; chlorophyll biosynthesis. The polypeptide is Glutamate-1-semialdehyde 2,1-aminomutase (Methylibium petroleiphilum (strain ATCC BAA-1232 / LMG 22953 / PM1)).